A 77-amino-acid chain; its full sequence is PTS system N-acetylglucosamine-specific EIIB component (77 aa).

One can recognise a PTS EIIB type-1 domain in the interval 2-77; it reads ASKAEKIVAG…PIAAEIEDMM (76 aa). The active-site Phosphocysteine intermediate; for EIIB activity is Cys24.

It catalyses the reaction N(pros)-phospho-L-histidyl-[protein] + N-acetyl-D-glucosamine(out) = N-acetyl-D-glucosamine 6-phosphate(in) + L-histidyl-[protein]. Functionally, the phosphoenolpyruvate-dependent sugar phosphotransferase system (sugar PTS), a major carbohydrate active transport system, catalyzes the phosphorylation of incoming sugar substrates concomitantly with their translocation across the cell membrane. This system is involved in N-acetylglucosamine (GlcNAc) transport. The polypeptide is PTS system N-acetylglucosamine-specific EIIB component (Streptomyces coelicolor (strain ATCC BAA-471 / A3(2) / M145)).